Consider the following 131-residue polypeptide: Flagellar assembly factor FliW (131 aa).

The protein belongs to the FliW family. In terms of assembly, interacts with translational regulator CsrA and flagellin(s).

Its subcellular location is the cytoplasm. Its function is as follows. Acts as an anti-CsrA protein, binds CsrA and prevents it from repressing translation of its target genes, one of which is flagellin. Binds to flagellin and participates in the assembly of the flagellum. In Campylobacter lari (strain RM2100 / D67 / ATCC BAA-1060), this protein is Flagellar assembly factor FliW.